The chain runs to 399 residues: Tyrosine--tRNA ligase (399 aa).

The 'HIGH' region motif lies at 42–51 (PTAPDLHLGH). A 'KMSKS' region motif is present at residues 226-230 (KMSKS). K229 provides a ligand contact to ATP. The S4 RNA-binding domain maps to 337–398 (LPVFQVVKQA…GKRKFASVVL (62 aa)).

Belongs to the class-I aminoacyl-tRNA synthetase family. TyrS type 2 subfamily. Homodimer.

It localises to the cytoplasm. It catalyses the reaction tRNA(Tyr) + L-tyrosine + ATP = L-tyrosyl-tRNA(Tyr) + AMP + diphosphate + H(+). Functionally, catalyzes the attachment of tyrosine to tRNA(Tyr) in a two-step reaction: tyrosine is first activated by ATP to form Tyr-AMP and then transferred to the acceptor end of tRNA(Tyr). The protein is Tyrosine--tRNA ligase of Aromatoleum aromaticum (strain DSM 19018 / LMG 30748 / EbN1) (Azoarcus sp. (strain EbN1)).